A 202-amino-acid chain; its full sequence is CASP-like protein 2B1 (202 aa).

Residues 1-29 (MSYLGVGVSPGNVPVYHGTNLKVVDRRVR) are Cytoplasmic-facing. The helical transmembrane segment at 30–50 (LAELVLRCVICGLGILAAVLV) threads the bilayer. Topologically, residues 51 to 72 (GTDTQVKVIFTIQKKAKFTDMK) are extracellular. Residues 73 to 93 (ALVFLVIANGIAAAYSLIQGL) form a helical membrane-spanning segment. The Cytoplasmic portion of the chain corresponds to 94–109 (RCVVSMVRGSVLFSKP). Residues 110–130 (LAWAIFSGDQVIAYLTLAAVA) traverse the membrane as a helical segment. Over 131-164 (AAAQSSVFGEFGQPELQWMKICNMYGKFCNQVGE) the chain is Extracellular. Residues 165–185 (GIVSAVGVSLSMVILSGISAF) traverse the membrane as a helical segment. Topologically, residues 186–202 (SLFRLYGGNKGTSGGRW) are cytoplasmic.

The protein belongs to the Casparian strip membrane proteins (CASP) family. Homodimer and heterodimers.

Its subcellular location is the cell membrane. This Vitis vinifera (Grape) protein is CASP-like protein 2B1.